The following is an 83-amino-acid chain: Small ribosomal subunit protein eS21 (83 aa).

The protein belongs to the eukaryotic ribosomal protein eS21 family. Component of the 40S small ribosomal subunit. Interacts with sta.

The protein resides in the cytoplasm. The protein localises to the cytosol. It localises to the rough endoplasmic reticulum. May be an associated component of the ribosome rather than a core structural subunit. May act as a translation initiation factor. Has a role in regulation of cell proliferation in the hematopoietic organs and the imaginal disks of larva. The protein is Small ribosomal subunit protein eS21 (RpS21) of Drosophila erecta (Fruit fly).